The primary structure comprises 1391 residues: DNA-directed RNA polymerase subunit beta' (1391 aa).

Positions 72, 74, 87, and 90 each coordinate Zn(2+). 3 residues coordinate Mg(2+): Asp-462, Asp-464, and Asp-466. Zn(2+) is bound by residues Cys-816, Cys-890, Cys-897, and Cys-900.

The protein belongs to the RNA polymerase beta' chain family. The RNAP catalytic core consists of 2 alpha, 1 beta, 1 beta' and 1 omega subunit. When a sigma factor is associated with the core the holoenzyme is formed, which can initiate transcription. Mg(2+) is required as a cofactor. Zn(2+) serves as cofactor.

It catalyses the reaction RNA(n) + a ribonucleoside 5'-triphosphate = RNA(n+1) + diphosphate. Its function is as follows. DNA-dependent RNA polymerase catalyzes the transcription of DNA into RNA using the four ribonucleoside triphosphates as substrates. This Neisseria meningitidis serogroup B (strain ATCC BAA-335 / MC58) protein is DNA-directed RNA polymerase subunit beta'.